The sequence spans 942 residues: Leucine--tRNA ligase 2 (942 aa).

The 'HIGH' region signature appears at 35–45; that stretch reads PYPNSPFHLGH. The short motif at 619-623 is the 'KMSKS' region element; that stretch reads KMSKS. ATP is bound at residue Lys-622.

The protein belongs to the class-I aminoacyl-tRNA synthetase family.

It localises to the cytoplasm. The enzyme catalyses tRNA(Leu) + L-leucine + ATP = L-leucyl-tRNA(Leu) + AMP + diphosphate. The chain is Leucine--tRNA ligase 2 from Sulfolobus acidocaldarius (strain ATCC 33909 / DSM 639 / JCM 8929 / NBRC 15157 / NCIMB 11770).